Here is a 264-residue protein sequence, read N- to C-terminus: Small ribosomal subunit protein uS2 (264 aa).

The interval 228–264 is disordered; sequence QLDAEDDYEDYDGSEYDDDYEETEYTDAVIPDEETEE. The segment covering 230 to 264 has biased composition (acidic residues); the sequence is DAEDDYEDYDGSEYDDDYEETEYTDAVIPDEETEE.

This sequence belongs to the universal ribosomal protein uS2 family.

The chain is Small ribosomal subunit protein uS2 from Nostoc punctiforme (strain ATCC 29133 / PCC 73102).